The following is a 329-amino-acid chain: Putative HTH-type transcriptional regulatory protein APE_0778 (329 aa).

In terms of domain architecture, HTH cro/C1-type spans 142–200 (LREKRLEKGLSLGHLAYMLKTSRKSIYEYERGVMSPSVEKAEKLVDILGEEILEPIDIL). Residues 153–172 (LGHLAYMLKTSRKSIYEYER) constitute a DNA-binding region (H-T-H motif).

The polypeptide is Putative HTH-type transcriptional regulatory protein APE_0778 (Aeropyrum pernix (strain ATCC 700893 / DSM 11879 / JCM 9820 / NBRC 100138 / K1)).